We begin with the raw amino-acid sequence, 475 residues long: UDP-N-acetylmuramate--L-alanine ligase (475 aa).

112–118 is an ATP binding site; the sequence is GTHGKTT.

Belongs to the MurCDEF family.

Its subcellular location is the cytoplasm. The catalysed reaction is UDP-N-acetyl-alpha-D-muramate + L-alanine + ATP = UDP-N-acetyl-alpha-D-muramoyl-L-alanine + ADP + phosphate + H(+). The protein operates within cell wall biogenesis; peptidoglycan biosynthesis. Its function is as follows. Cell wall formation. This is UDP-N-acetylmuramate--L-alanine ligase from Methylobacillus flagellatus (strain ATCC 51484 / DSM 6875 / VKM B-1610 / KT).